We begin with the raw amino-acid sequence, 152 residues long: MGFAEAFLEHLWKNLQDPSNPAIIRQAAGNYIGSFLARAKFISLITVKPCLDLLVNWLHIYLNNQDSGTKAFCDVALHGPFYSACQAVFYTFVFRHKQLLSGNLKEGLQYPQSLNFERIVMSQLNPLKICLPSVVNFFAAITKMKTCGYGWW.

Belongs to the RRN3 family.

This is Putative RRN3-like protein RRN3P1 (RRN3P1) from Homo sapiens (Human).